The following is a 190-amino-acid chain: Elongation factor P-like protein (190 aa).

It belongs to the elongation factor P family.

The polypeptide is Elongation factor P-like protein (Serratia proteamaculans (strain 568)).